Consider the following 393-residue polypeptide: Formate-dependent phosphoribosylglycinamide formyltransferase (393 aa).

N(1)-(5-phospho-beta-D-ribosyl)glycinamide-binding positions include 22 to 23 (EL) and Glu-82. ATP is bound by residues Arg-114, Lys-155, 160 to 165 (SSGKGQ), 195 to 198 (EGFI), and Glu-203. Residues 119–308 (RLAAEELDLP…QFALHARAIL (190 aa)) form the ATP-grasp domain. Residues Glu-267 and Glu-279 each contribute to the Mg(2+) site. N(1)-(5-phospho-beta-D-ribosyl)glycinamide is bound by residues Asp-286, Lys-356, and 363-364 (RR).

Belongs to the PurK/PurT family. In terms of assembly, homodimer.

The enzyme catalyses N(1)-(5-phospho-beta-D-ribosyl)glycinamide + formate + ATP = N(2)-formyl-N(1)-(5-phospho-beta-D-ribosyl)glycinamide + ADP + phosphate + H(+). Its pathway is purine metabolism; IMP biosynthesis via de novo pathway; N(2)-formyl-N(1)-(5-phospho-D-ribosyl)glycinamide from N(1)-(5-phospho-D-ribosyl)glycinamide (formate route): step 1/1. Its function is as follows. Involved in the de novo purine biosynthesis. Catalyzes the transfer of formate to 5-phospho-ribosyl-glycinamide (GAR), producing 5-phospho-ribosyl-N-formylglycinamide (FGAR). Formate is provided by PurU via hydrolysis of 10-formyl-tetrahydrofolate. The polypeptide is Formate-dependent phosphoribosylglycinamide formyltransferase (Pseudomonas fluorescens (strain Pf0-1)).